Reading from the N-terminus, the 2167-residue chain is Myosin-VIIa (2167 aa).

The 671-residue stretch at 63 to 733 (QGVEDMISLG…HDLFLEQERD (671 aa)) folds into the Myosin motor domain. ATP is bound at residue 156 to 163 (GESGAGKT). Actin-binding regions lie at residues 612–634 (LDAL…KPNE) and 712–726 (QLGH…AHDL). IQ domains follow at residues 736–758 (LTRK…RFLR), 759–788 (LRAA…GYMR), 805–827 (LRGH…EYGH), and 828–857 (KMWA…EHKQ). A coiled-coil region spans residues 886-919 (QHYRDRLHELERREIQEQLENRRRVEVNMNIIND). The 238-residue stretch at 1008 to 1245 (YAKKALKHPL…PSWLELQATK (238 aa)) folds into the MyTH4 1 domain. The FERM 1 domain occupies 1250–1560 (IMLPITFMDG…YFLDGLKKRS (311 aa)). The SH3 domain occupies 1558–1627 (KRSKYVIALQ…PAETVYVLPT (70 aa)). 2 positions are modified to phosphoserine: S1651 and S1654. One can recognise a MyTH4 2 domain in the interval 1701 to 1849 (YSRDPIKAPL…PHQVEVEAIQ (149 aa)). The 304-residue stretch at 1855–2158 (IFHKVYFPDD…SYISLMLTNM (304 aa)) folds into the FERM 2 domain. Residue T2045 is modified to Phosphothreonine.

Belongs to the TRAFAC class myosin-kinesin ATPase superfamily. Myosin family. Homodimerizes in a two headed molecule through the formation of a coiled-coil rod. Homodimers motility is approximately 8-10 times slower than that of myosin V, and its step size is 30 nm, which is consistent with the presence of five IQ motifs in its neck region. Interacts with Cad99C (via the cytoplasmic domain). Interacts with zip and Sans. In terms of tissue distribution, expressed in the setae, micro- and macrochaetae on the head, thorax and wing.

It localises to the cytoplasm. Its subcellular location is the cell cortex. The protein resides in the cell projection. The protein localises to the microvillus. In terms of biological role, myosins are actin-based motor molecules with ATPase activity. Unconventional myosins serve in intracellular movements: can function in cells as a single-molecule cargo transporter. A very slow and high-duty-ratio motor, may be suitable for tension maintenance of actin filaments. Their highly divergent tails are presumed to bind to membranous compartments, which would be moved relative to actin filaments. Plays a key role in the formation of cellular projections and other actin-based functions required for embryonic and larval viability. Necessary for auditory transduction: plays a role in Johnston's organ organization by functioning in scolopidial apical attachment and therefore to acoustic stimulus propagation from the antenna a2/a3 joint to transducing elements. Interaction with the myosin zip may be important for its function in scolopidial apical attachment. During oogenesis it has Cad99c-dependent and Cad99c-independent roles in regulating the shape and spacing of the follicle cell microvilli which secrete eggshell material such as the vitelline membrane. May be required for the normal expression of Cad99c in the follicle cell microvilli. This chain is Myosin-VIIa, found in Drosophila melanogaster (Fruit fly).